The chain runs to 96 residues: Small ribosomal subunit protein bS18 (96 aa).

Positions 1–22 are enriched in basic and acidic residues; it reads MYKDVDSHQRDSRSDGHQDGFK. The tract at residues 1 to 25 is disordered; the sequence is MYKDVDSHQRDSRSDGHQDGFKKNP.

This sequence belongs to the bacterial ribosomal protein bS18 family. Part of the 30S ribosomal subunit. Forms a tight heterodimer with protein bS6.

Binds as a heterodimer with protein bS6 to the central domain of the 16S rRNA, where it helps stabilize the platform of the 30S subunit. The polypeptide is Small ribosomal subunit protein bS18 (Borrelia hermsii (strain HS1 / DAH)).